The primary structure comprises 204 residues: LexA repressor (204 aa).

The segment at residues Val28–Asp48 is a DNA-binding region (H-T-H motif). Catalysis depends on for autocatalytic cleavage activity residues Ser126 and Lys164.

The protein belongs to the peptidase S24 family. Homodimer.

The catalysed reaction is Hydrolysis of Ala-|-Gly bond in repressor LexA.. Its function is as follows. Represses a number of genes involved in the response to DNA damage (SOS response), including recA and lexA. In the presence of single-stranded DNA, RecA interacts with LexA causing an autocatalytic cleavage which disrupts the DNA-binding part of LexA, leading to derepression of the SOS regulon and eventually DNA repair. This Exiguobacterium sibiricum (strain DSM 17290 / CCUG 55495 / CIP 109462 / JCM 13490 / 255-15) protein is LexA repressor.